The primary structure comprises 248 residues: Functional amyloid sbunit FapE (248 aa).

The first 20 residues, 1–20 (MNTSRWLTALCLAASMPAYA), serve as a signal peptide directing secretion.

This sequence belongs to the FapE family. As to quaternary structure, a minor component of purified amyloid fibrils. Fibrils are resistant to boiling in 2% (weight/vol) SDS and require &gt;90% (vol/vol) formic acid to dissolve.

It is found in the fimbrium. Its subcellular location is the secreted. In terms of biological role, a minor component of the functional amyloid in this bacterium. Upon overexpression of the endogenous six-gene locus (fapA-fapF) in situ, cells form large clumps during liquid growth, make large amounts of biofilm and produce amyloid fibrils. Expression of the 6 gene operon in E.coli strain BL21(DE3) induces flocculation and biofilm formation with copious extracellular fibrils. The sequence is that of Functional amyloid sbunit FapE from Pseudomonas fluorescens.